A 702-amino-acid polypeptide reads, in one-letter code: Elongation factor G (702 aa).

The region spanning 8–290 (TRYRNIGISA…AVIEYLPAPT (283 aa)) is the tr-type G domain. Residues 17–24 (AHIDAGKT), 88–92 (DTPGH), and 142–145 (NKMD) contribute to the GTP site.

The protein belongs to the TRAFAC class translation factor GTPase superfamily. Classic translation factor GTPase family. EF-G/EF-2 subfamily.

It is found in the cytoplasm. Functionally, catalyzes the GTP-dependent ribosomal translocation step during translation elongation. During this step, the ribosome changes from the pre-translocational (PRE) to the post-translocational (POST) state as the newly formed A-site-bound peptidyl-tRNA and P-site-bound deacylated tRNA move to the P and E sites, respectively. Catalyzes the coordinated movement of the two tRNA molecules, the mRNA and conformational changes in the ribosome. This is Elongation factor G from Erwinia tasmaniensis (strain DSM 17950 / CFBP 7177 / CIP 109463 / NCPPB 4357 / Et1/99).